The sequence spans 570 residues: Ferroportin (570 aa).

Over 1-23 (MTKSRDQTHQEGCCGSLANYLTS) the chain is Cytoplasmic. A helical transmembrane segment spans residues 24 to 53 (AKFLLYLGHSLSTWGDRMWHFAVSVFLVEL). Residues aspartate 39 and histidine 43 each contribute to the Fe cation site. Topologically, residues 54–57 (YGNS) are extracellular. The helical transmembrane segment at 58–84 (LLLTAVYGLVVAGSVLVLGAIIGDWVD) threads the bilayer. Over 85–87 (KNA) the chain is Cytoplasmic. The helical transmembrane segment at 88–118 (RLKVAQTSLVVQNVSVILCGIILMMVFLHKN) threads the bilayer. Topologically, residues 119 to 126 (ELLNMYHG) are extracellular. Residues 127–162 (WVLTVCYILIITIANIANLASTATAITIQRDWIVVV) traverse the membrane as a helical segment. Residues 163-164 (AG) lie on the Cytoplasmic side of the membrane. A helical membrane pass occupies residues 165–195 (ENRSRLADMNATIRRIDQLTNILAPMAVGQI). Topologically, residues 196-202 (MTFGSPV) are extracellular. Residues 203–229 (IGCGFISGWNLVSMCVEYFLLWKVYQK) traverse the membrane as a helical segment. The Cytoplasmic segment spans residues 230 to 306 (TPALAVKAAL…DGWVSYYNQP (77 aa)). Residues 307–333 (VFLAGMGLAFLYMTVLGFDCITTGYAY) traverse the membrane as a helical segment. Cysteine 326 is a binding site for Fe cation. Topologically, residues 334–338 (TQGLS) are extracellular. A helical transmembrane segment spans residues 339–366 (GSILSVLMGASAITGIMGTVAFTWLRRK). Residues 367 to 368 (CG) are Cytoplasmic-facing. The chain crosses the membrane as a helical span at residues 369–391 (LVRTGLFSGLAQLSCLILCVISV). Residues 392 to 452 (FMPGSPLDLS…EMSTKSVPII (61 aa)) lie on the Extracellular side of the membrane. Residues 453 to 482 (SVSLLFAGVIAARIGLWSFDLTVTQLLQEN) form a helical membrane-spanning segment. Topologically, residues 483–487 (VIESE) are cytoplasmic. A helical membrane pass occupies residues 488-512 (RGIINGVQNSMNYLLDLLHFIMVIL). Histidine 506 contributes to the Fe cation binding site. At 513–515 (APN) the chain is on the extracellular side. The helical transmembrane segment at 516-541 (PEAFGLLVLISVSFVAMGHLMYFRFA) threads the bilayer. The Cytoplasmic segment spans residues 542 to 570 (QKTLGNQIFVCAPDEKEVTDESQPNTSVV).

This sequence belongs to the ferroportin (FP) (TC 2.A.100) family. SLC40A subfamily. In terms of assembly, identified in a complex with STOM. Interacts with HAMP; affinity of the peptide hormone HAMP for SLC40A1 increases by 80-fold in the presence of iron and the interaction promotes SLC40A1 ubiquitination and degradation. Part of a complex composed of SLC40A1/ferroportin, TF/transferrin and HEPH/hephaestin that transfers iron from cells to transferrin. Post-translationally, polyubiquitinated by RNF217; leading to proteasomal degradation. Under conditions of high systemic iron levels, both the hormone peptide hepcidin/HAMP and holo(iron bound)-transferrin/TF induce the ubiquitination, internalization and proteasomal degradation of SLC40A1 to control iron release from cells.

It is found in the cell membrane. Its subcellular location is the basolateral cell membrane. It carries out the reaction Fe(2+)(in) = Fe(2+)(out). Its activity is regulated as follows. During elevated serum iron levels, liver-derived hepcidin/HAMP negatively regulates cell surface SLC40A1 by inducing its ubiquitination, internalization, and degradation. Indeed, hepcidin/HAMP affinity towards ferroportin/SLC40A1 increases by 80-fold in the presence of iron. Transports Fe(2+) from the inside of a cell to the outside of the cell, playing a key role for maintaining systemic iron homeostasis. Transports iron from intestinal, splenic, hepatic cells, macrophages and erythrocytes into the blood to provide iron to other tissues. Controls therefore dietary iron uptake, iron recycling by macrophages and erythrocytes, and release of iron stores in hepatocytes. When iron is in excess in serum, circulating HAMP/hepcidin levels increase resulting in a degradation of SLC40A1, thus limiting the iron efflux to plasma. The protein is Ferroportin of Rattus norvegicus (Rat).